The sequence spans 116 residues: Aspartate 1-decarboxylase (116 aa).

The Schiff-base intermediate with substrate; via pyruvic acid role is filled by Ser25. At Ser25 the chain carries Pyruvic acid (Ser). Position 57 (Thr57) interacts with substrate. The active-site Proton donor is Tyr58. Position 72–74 (72–74 (GAA)) interacts with substrate.

The protein belongs to the PanD family. Heterooctamer of four alpha and four beta subunits. Pyruvate is required as a cofactor. Is synthesized initially as an inactive proenzyme, which is activated by self-cleavage at a specific serine bond to produce a beta-subunit with a hydroxyl group at its C-terminus and an alpha-subunit with a pyruvoyl group at its N-terminus.

The protein localises to the cytoplasm. It carries out the reaction L-aspartate + H(+) = beta-alanine + CO2. It functions in the pathway cofactor biosynthesis; (R)-pantothenate biosynthesis; beta-alanine from L-aspartate: step 1/1. Its function is as follows. Catalyzes the pyruvoyl-dependent decarboxylation of aspartate to produce beta-alanine. This is Aspartate 1-decarboxylase from Helicobacter pylori (strain HPAG1).